The chain runs to 572 residues: Phosphoenolpyruvate-protein phosphotransferase (572 aa).

His190 (tele-phosphohistidine intermediate) is an active-site residue. Positions 297 and 333 each coordinate phosphoenolpyruvate. Mg(2+)-binding residues include Glu427 and Asp451. Phosphoenolpyruvate-binding positions include 450-451 (ND) and Arg461. The active-site Proton donor is the Cys498.

This sequence belongs to the PEP-utilizing enzyme family. Homodimer. It depends on Mg(2+) as a cofactor.

It localises to the cytoplasm. The enzyme catalyses L-histidyl-[protein] + phosphoenolpyruvate = N(pros)-phospho-L-histidyl-[protein] + pyruvate. Functionally, general (non sugar-specific) component of the phosphoenolpyruvate-dependent sugar phosphotransferase system (sugar PTS). This major carbohydrate active-transport system catalyzes the phosphorylation of incoming sugar substrates concomitantly with their translocation across the cell membrane. Enzyme I transfers the phosphoryl group from phosphoenolpyruvate (PEP) to the phosphoryl carrier protein (HPr). This chain is Phosphoenolpyruvate-protein phosphotransferase (ptsI), found in Mycoplasma genitalium (strain ATCC 33530 / DSM 19775 / NCTC 10195 / G37) (Mycoplasmoides genitalium).